The chain runs to 691 residues: MNHHHYSLVIFHLILFLSLDFPTLSHRFSPPLQNLTLYGDAFFRDRTISLTQQQPCFPSVTTPPSKPSSSGIGRALYVYPIKFLEPSTNTTASFSCRFSFSIIASPSCPFGDGFAFLITSNADSFVFSNGFLGLPNPDDSFIAVEFDTRFDPVHGDINDNHVGIDVSSIFSVSSVDAISKGFDLKSGKKMMAWIEYSDVLKLIRVWVGYSRVKPTSPVLSTQIDLSGKVKEYMHVGFSASNAGIGSALHIVERWKFRTFGSHSDAIQEEEEEKDEECLVCSGEVSENPKEIHRKGFNFRVTVVGLKIPVWSLLPGLAAIVILVAFIVFSLICGKKRISEEADSNSGLVRMPGRLSLAEIKSATSGFNENAIVGQGASATVYRGSIPSIGSVAVKRFDREHWPQCNRNPFTTEFTTMTGYLRHKNLVQFQGWCSEGTETALVFEYLPNGSLSEFLHKKPSSDPSEEIIVLSWKQRVNIILGVASALTYLHEECERQIIHRDVKTCNIMLDAEFNAKLGDFGLAEIYEHSALLAGRAATLPAGTMGYLAPEYVYTGVPSEKTDVYSFGVVVLEVCTGRRPVGDDGAVLVDLMWSHWETGKVLDGADIMLREEFDAEEMERVLMVGMVCAHPDSEKRPRVKDAVRIIRGEAPLPVLPARRPLLRIRPANEAEEMIVDGLVGEDLPWMTPKSHFS.

The N-terminal stretch at 1-25 (MNHHHYSLVIFHLILFLSLDFPTLS) is a signal peptide. Topologically, residues 26 to 311 (HRFSPPLQNL…VVGLKIPVWS (286 aa)) are extracellular. The segment at 27–257 (RFSPPLQNLT…LHIVERWKFR (231 aa)) is legume-lectin like. Residues N34 and N89 are each glycosylated (N-linked (GlcNAc...) asparagine). Residues 312–332 (LLPGLAAIVILVAFIVFSLIC) form a helical membrane-spanning segment. Residues 333–691 (GKKRISEEAD…PWMTPKSHFS (359 aa)) lie on the Cytoplasmic side of the membrane. The Protein kinase domain maps to 366–653 (FNENAIVGQG…IRGEAPLPVL (288 aa)). Residues 372–380 (VGQGASATV) and K394 contribute to the ATP site. D500 functions as the Proton acceptor in the catalytic mechanism.

The protein in the C-terminal section; belongs to the protein kinase superfamily. Ser/Thr protein kinase family. This sequence in the N-terminal section; belongs to the leguminous lectin family.

The protein resides in the cell membrane. The catalysed reaction is L-seryl-[protein] + ATP = O-phospho-L-seryl-[protein] + ADP + H(+). It carries out the reaction L-threonyl-[protein] + ATP = O-phospho-L-threonyl-[protein] + ADP + H(+). In terms of biological role, involved in resistance response to the pathogenic oomycetes Phytophthora infestans and Phytophthora capsici and to the pathogenic bacteria Pseudomonas syringae. This chain is L-type lectin-domain containing receptor kinase S.6, found in Arabidopsis thaliana (Mouse-ear cress).